A 144-amino-acid chain; its full sequence is Transcriptional regulator SlyA (144 aa).

Residues 2 to 135 enclose the HTH marR-type domain; sequence ESPLGSDLSR…LSQMISKLEK (134 aa). Positions 49-72 form a DNA-binding region, H-T-H motif; sequence QIQLAKAIGIEQPSLVRTLDQLEE.

This sequence belongs to the SlyA family. As to quaternary structure, homodimer.

In terms of biological role, transcription regulator that can specifically activate or repress expression of target genes. This chain is Transcriptional regulator SlyA, found in Wigglesworthia glossinidia brevipalpis.